We begin with the raw amino-acid sequence, 248 residues long: Pyridoxine 5'-phosphate synthase (248 aa).

Asn-12 is a binding site for 3-amino-2-oxopropyl phosphate. 14 to 15 serves as a coordination point for 1-deoxy-D-xylulose 5-phosphate; that stretch reads DH. A 3-amino-2-oxopropyl phosphate-binding site is contributed by Arg-23. His-48 acts as the Proton acceptor in catalysis. Positions 50 and 55 each coordinate 1-deoxy-D-xylulose 5-phosphate. Residue Glu-75 is the Proton acceptor of the active site. Residue Thr-105 coordinates 1-deoxy-D-xylulose 5-phosphate. His-196 (proton donor) is an active-site residue. Residues Gly-197 and 218–219 contribute to the 3-amino-2-oxopropyl phosphate site; that span reads GH.

Belongs to the PNP synthase family. In terms of assembly, homooctamer; tetramer of dimers.

The protein resides in the cytoplasm. The enzyme catalyses 3-amino-2-oxopropyl phosphate + 1-deoxy-D-xylulose 5-phosphate = pyridoxine 5'-phosphate + phosphate + 2 H2O + H(+). It functions in the pathway cofactor biosynthesis; pyridoxine 5'-phosphate biosynthesis; pyridoxine 5'-phosphate from D-erythrose 4-phosphate: step 5/5. Functionally, catalyzes the complicated ring closure reaction between the two acyclic compounds 1-deoxy-D-xylulose-5-phosphate (DXP) and 3-amino-2-oxopropyl phosphate (1-amino-acetone-3-phosphate or AAP) to form pyridoxine 5'-phosphate (PNP) and inorganic phosphate. The polypeptide is Pyridoxine 5'-phosphate synthase (Azotobacter vinelandii (strain DJ / ATCC BAA-1303)).